The sequence spans 145 residues: MIIAITEIMDLIPHRYPFLLVDRVLKIDPNKSITGIKNVTVNEPQFTGHFPTRPVMPGVLMVESMAQLAAILVAKSLDSTKNKEVFLMSIENTKFRRIVQPGDTMHIHSVIDQQRANVWKFSSKVMVECEIAAESKFTAMIKDKM.

The active site involves histidine 49.

It belongs to the thioester dehydratase family. FabZ subfamily.

It is found in the cytoplasm. It catalyses the reaction a (3R)-hydroxyacyl-[ACP] = a (2E)-enoyl-[ACP] + H2O. Functionally, involved in unsaturated fatty acids biosynthesis. Catalyzes the dehydration of short chain beta-hydroxyacyl-ACPs and long chain saturated and unsaturated beta-hydroxyacyl-ACPs. The chain is 3-hydroxyacyl-[acyl-carrier-protein] dehydratase FabZ from Rickettsia typhi (strain ATCC VR-144 / Wilmington).